Here is a 149-residue protein sequence, read N- to C-terminus: Transcriptional repressor NrdR (149 aa).

The segment at Cys-3–Cys-34 is a zinc-finger region. Positions Ile-49–Thr-139 constitute an ATP-cone domain.

Belongs to the NrdR family. It depends on Zn(2+) as a cofactor.

Functionally, negatively regulates transcription of bacterial ribonucleotide reductase nrd genes and operons by binding to NrdR-boxes. The chain is Transcriptional repressor NrdR from Clostridium beijerinckii (strain ATCC 51743 / NCIMB 8052) (Clostridium acetobutylicum).